The following is a 375-amino-acid chain: Putative ZDHHC-type palmitoyltransferase 8 (375 aa).

2 helical membrane passes run 4–24 (LFDF…TDFL) and 40–60 (VVGM…VSLW). Asn95 carries an N-linked (GlcNAc...) asparagine glycan. The next 3 membrane-spanning stretches (helical) occupy residues 105–125 (ITFY…YYYY), 221–241 (FILF…LSFF), and 285–305 (YSFI…ILLF). Positions 176–226 (VSDGKWSTINKPKSHHCRICKRCIDSMDHHCPFAANCIGINNHHYFILFIG) constitute a DHHC domain. N-linked (GlcNAc...) asparagine glycosylation occurs at Asn343.

This sequence belongs to the DHHC palmitoyltransferase family.

It is found in the membrane. It carries out the reaction L-cysteinyl-[protein] + hexadecanoyl-CoA = S-hexadecanoyl-L-cysteinyl-[protein] + CoA. The polypeptide is Putative ZDHHC-type palmitoyltransferase 8 (Dictyostelium discoideum (Social amoeba)).